The chain runs to 247 residues: Translation initiation factor IF-3 (247 aa).

Disordered regions lie at residues 1 to 20 and 188 to 247; these read MIRE…TNRR and LVRQ…PTAS. The needed for vegetative and developmental functions, but not for viability stretch occupies residues 182–247; it reads AQKARELVRQ…AAEAQSPTAS (66 aa). A compositionally biased stretch (low complexity) spans 207–217; that stretch reads AGKSAAGASSG. A compositionally biased stretch (basic and acidic residues) spans 218–232; it reads AEEKAEETAEEKKEA. A compositionally biased stretch (low complexity) spans 233–247; the sequence is QAAPAAAEAQSPTAS.

It belongs to the IF-3 family. In terms of assembly, monomer.

The protein resides in the cytoplasm. In terms of biological role, IF-3 binds to the 30S ribosomal subunit and shifts the equilibrium between 70S ribosomes and their 50S and 30S subunits in favor of the free subunits, thus enhancing the availability of 30S subunits on which protein synthesis initiation begins. In Myxococcus xanthus, this protein is Translation initiation factor IF-3.